Here is a 232-residue protein sequence, read N- to C-terminus: Putative dimethylsulfoniopropionate lyase DddL (232 aa).

A divalent metal cation-binding residues include histidine 154, glutamate 159, tyrosine 161, and histidine 190.

The protein belongs to the non-heme iron-dependent dioxygenase family. As to quaternary structure, homodimer. The cofactor is a divalent metal cation.

It carries out the reaction S,S-dimethyl-beta-propiothetin = acrylate + dimethyl sulfide + H(+). Functionally, may cleave dimethylsulfoniopropionate (DMSP), releasing dimethyl sulfide (DMS). DMS is the principal form by which sulfur is transported from oceans to the atmosphere. The real activity of the protein is however subject to debate and it is unclear whether it constitutes a real dimethylsulfoniopropionate lyase in vivo. This is Putative dimethylsulfoniopropionate lyase DddL (dddL) from Cereibacter sphaeroides (strain ATCC 17023 / DSM 158 / JCM 6121 / CCUG 31486 / LMG 2827 / NBRC 12203 / NCIMB 8253 / ATH 2.4.1.) (Rhodobacter sphaeroides).